A 478-amino-acid chain; its full sequence is Protein FAM83E (478 aa).

The tract at residues 1–293 (MAASQLAALE…LYAASCPLPP (293 aa)) is DUF1669. Disordered stretches follow at residues 292 to 334 (PPAP…PLAH), 359 to 436 (RART…LPPA), and 452 to 478 (DATFKLQEPRGVRPSDWAPRAGLGGQP). Residues 309 to 319 (RSPHRVSRRRS) are compositionally biased toward basic residues. The span at 379–388 (RLSQLSGSSD) shows a compositional bias: polar residues.

This sequence belongs to the FAM83 family. As to quaternary structure, directly interacts (via DUF1669) with CSNK1A1, CSNK1A1L, CSNK1D and CSNK1E. May interact with RAF1.

It is found in the cytoplasm. It localises to the perinuclear region. Functionally, may play a role in MAPK signaling. This chain is Protein FAM83E, found in Homo sapiens (Human).